A 159-amino-acid chain; its full sequence is Nucleotide-binding protein PLES_47741 (159 aa).

This sequence belongs to the YajQ family.

In terms of biological role, nucleotide-binding protein. The polypeptide is Nucleotide-binding protein PLES_47741 (Pseudomonas aeruginosa (strain LESB58)).